Here is a 137-residue protein sequence, read N- to C-terminus: Holo-[acyl-carrier-protein] synthase (137 aa).

Mg(2+)-binding residues include aspartate 8 and glutamate 58.

The protein belongs to the P-Pant transferase superfamily. AcpS family. Requires Mg(2+) as cofactor.

It is found in the cytoplasm. It carries out the reaction apo-[ACP] + CoA = holo-[ACP] + adenosine 3',5'-bisphosphate + H(+). Functionally, transfers the 4'-phosphopantetheine moiety from coenzyme A to a Ser of acyl-carrier-protein. The protein is Holo-[acyl-carrier-protein] synthase of Lactobacillus delbrueckii subsp. bulgaricus (strain ATCC BAA-365 / Lb-18).